Reading from the N-terminus, the 113-residue chain is TYRO protein tyrosine kinase-binding protein (113 aa).

The signal sequence occupies residues 1-21 (MGGLEPCSRLLLLPLLLAVSG). The Extracellular segment spans residues 22 to 40 (LRPVQAQAQSDCSCSTVSP). The helical transmembrane segment at 41-61 (GVLAGIVMGDLVLTVLIALAV) threads the bilayer. A Ca(2+)-binding site is contributed by D50. The Cytoplasmic portion of the chain corresponds to 62-113 (YFLGRLVPRGRGAAEAATRKQRITETESPYQELQGQRSDVYSDLNTQRPYYK). Residues 75-113 (AEAATRKQRITETESPYQELQGQRSDVYSDLNTQRPYYK) are disordered. In terms of domain architecture, ITAM spans 80–108 (RKQRITETESPYQELQGQRSDVYSDLNTQ). Over residues 87–113 (TESPYQELQGQRSDVYSDLNTQRPYYK) the composition is skewed to polar residues. Phosphotyrosine is present on residues Y91 and Y102.

Belongs to the TYROBP family. In terms of assembly, homodimer; disulfide-linked. Homotrimer; disulfide-linked. Homotetramer; disulfide-linked. Homotrimers and homotetramers form when low levels of partner receptors are available and are competitive with assembly with interacting receptors. They may represent alternative oligomerization states or may be intermediates in the receptor assembly process. Binding of a metal cation aids in homooligomerization through coordination of the metal ion by the subunits of the oligomer. Interacts with TREM1. Interacts with TREM2. Interacts with SIRPB1. Interacts with CLECSF5. Interacts with SIGLEC14. Interacts with CD300LB and CD300E. Interacts with CD300C2. Interacts (via ITAM domain) with SYK (via SH2 domains); activates SYK mediating neutrophil and macrophage integrin-mediated activation. Interacts with KLRC2, KIR2DS3 and KIR2DS5. Interacts with CD300H. Interacts with KIR2DS1. Interacts with KLRD1. Interacts with SIGLEC1. Post-translationally, following ligand binding by associated receptors, tyrosine phosphorylated in the ITAM domain which leads to activation of additional tyrosine kinases and subsequent cell activation. In terms of tissue distribution, expressed at low levels in the early development of the hematopoietic system and in the promonocytic stage and at high levels in mature monocytes. Expressed in hematological cells and tissues such as peripheral blood leukocytes and spleen. Also found in bone marrow, lymph nodes, placenta, lung and liver. Expressed at lower levels in different parts of the brain especially in the basal ganglia and corpus callosum.

It is found in the cell membrane. Adapter protein which non-covalently associates with activating receptors found on the surface of a variety of immune cells to mediate signaling and cell activation following ligand binding by the receptors. TYROBP is tyrosine-phosphorylated in the ITAM domain following ligand binding by the associated receptors which leads to activation of additional tyrosine kinases and subsequent cell activation. Also has an inhibitory role in some cells. Non-covalently associates with activating receptors of the CD300 family to mediate cell activation. Also mediates cell activation through association with activating receptors of the CD200R family. Required for neutrophil activation mediated by integrin. Required for the activation of myeloid cells mediated by the CLEC5A/MDL1 receptor. Associates with natural killer (NK) cell receptors such as KIR2DS2 and the KLRD1/KLRC2 heterodimer to mediate NK cell activation. Also enhances trafficking and cell surface expression of NK cell receptors KIR2DS1, KIR2DS2 and KIR2DS4 and ensures their stability at the cell surface. Associates with SIRPB1 to mediate activation of myeloid cells such as monocytes and dendritic cells. Associates with TREM1 to mediate activation of neutrophils and monocytes. Associates with TREM2 on monocyte-derived dendritic cells to mediate up-regulation of chemokine receptor CCR7 and dendritic cell maturation and survival. Association with TREM2 mediates cytokine-induced formation of multinucleated giant cells which are formed by the fusion of macrophages. Stabilizes the TREM2 C-terminal fragment (TREM2-CTF) produced by TREM2 ectodomain shedding which suppresses the release of pro-inflammatory cytokines. In microglia, required with TREM2 for phagocytosis of apoptotic neurons. Required with ITGAM/CD11B in microglia to control production of microglial superoxide ions which promote the neuronal apoptosis that occurs during brain development. Promotes pro-inflammatory responses in microglia following nerve injury which accelerates degeneration of injured neurons. Positively regulates the expression of the IRAK3/IRAK-M kinase and IL10 production by liver dendritic cells and inhibits their T cell allostimulatory ability. Negatively regulates B cell proliferation. Required for CSF1-mediated osteoclast cytoskeletal organization. Positively regulates multinucleation during osteoclast development. The sequence is that of TYRO protein tyrosine kinase-binding protein from Homo sapiens (Human).